We begin with the raw amino-acid sequence, 552 residues long: Acyl-CoA synthetase FUM10 (552 aa).

An AMP-binding site is contributed by 183-194; the sequence is ELFTSGTTGAPK. The tract at residues 463 to 536 is AMP-binding; it reads EIEHVARLHD…QEIPYNRTGK (74 aa).

The protein belongs to the ATP-dependent AMP-binding enzyme family.

It functions in the pathway mycotoxin biosynthesis. Its function is as follows. Acyl-CoA synthetase; part of the gene cluster that mediates the biosynthesis of fumonisins B1 (FB1), B2 (FB2), B3 (FB3), and B4 (FB4), which are carcinogenic mycotoxins. Within the pathway, FUM10 is involved the addition of the tricarballylic moieties to the carbon backbone. FUM10 catalyzes the CoA activation of citrate to form tricarballylic acid. The biosynthesis starts with the FUM1-catalyzed carbon chain assembly from one molecule of acetyl-CoA, eight molecules of malonyl-CoA, and two molecules of methionine (in S-adenosyl form). The C18 polyketide chain is released from the enzyme by a nucleophilic attack of a carbanion, which is derived from R-carbon of alanine by decarboxylation, on the carbonyl carbon of polyketide acyl chain. This step is catalyzed by the pyridoxal 5'-phosphate-dependent aminoacyl transferase FUM8. The resultant 3-keto intermediate is then stereospecifically reduced to a 3-hydroxyl product by reductase FUM13. Subsequent oxidations at C-10 by the cytochrome P450 monooxygenase FUM2, C-14 and C-15 by FUM6, FUM12 or FUM15, tricarballylic esterification of the hydroxyl groups on C-14 and C-15 by acyltransferase FUM14, and C-5 hydroxylation by 2-keto-glutarate-dependent dioxygenase FUM3 furnish the biosynthesis of fumonisins. The tricarballylic moieties are most likely derived from the citric acid cycle, and their addition to the carbon backbone may involve FUM7, FUM10, FUM11 and FUM14. The chain is Acyl-CoA synthetase FUM10 from Gibberella moniliformis (strain M3125 / FGSC 7600) (Maize ear and stalk rot fungus).